The chain runs to 368 residues: Phosphate acyltransferase (368 aa).

The segment at 335–368 (VSLGDGEHDAGGAGHTGPAAGQHAEPPAAQSSKA) is disordered.

The protein belongs to the PlsX family. Homodimer. Probably interacts with PlsY.

It is found in the cytoplasm. The enzyme catalyses a fatty acyl-[ACP] + phosphate = an acyl phosphate + holo-[ACP]. It functions in the pathway lipid metabolism; phospholipid metabolism. Its function is as follows. Catalyzes the reversible formation of acyl-phosphate (acyl-PO(4)) from acyl-[acyl-carrier-protein] (acyl-ACP). This enzyme utilizes acyl-ACP as fatty acyl donor, but not acyl-CoA. In Burkholderia vietnamiensis (strain G4 / LMG 22486) (Burkholderia cepacia (strain R1808)), this protein is Phosphate acyltransferase.